The chain runs to 248 residues: 3,4-dihydroxyphthalate decarboxylase (248 aa).

Residue E90 is the Proton donor/acceptor of the active site. Residues E90, H109, H111, and H177 each coordinate a divalent metal cation.

This sequence belongs to the aldolase class II family. It depends on a divalent metal cation as a cofactor.

It carries out the reaction 3,4-dihydroxyphthalate + H(+) = 3,4-dihydroxybenzoate + CO2. Its pathway is xenobiotic degradation; phthalate degradation. Functionally, catalyzes the decarboxylation of 3,4-dihydroxyphthalate to protocatechuate (3,4-dihydroxybenzoate) during phthalate metabolism. This Arthrobacter keyseri protein is 3,4-dihydroxyphthalate decarboxylase.